The primary structure comprises 211 residues: Putative ATP-dependent Clp protease proteolytic subunit-like (211 aa).

The segment at 1–24 (MTRPSARHVLPEFTERTSAGTRTS) is disordered. The active site involves His-129.

Belongs to the peptidase S14 family.

Functionally, has lost one of the conserved residue (Ser) proposed to be part of the active site. Therefore it could be inactive. This chain is Putative ATP-dependent Clp protease proteolytic subunit-like, found in Streptomyces coelicolor (strain ATCC BAA-471 / A3(2) / M145).